A 205-amino-acid chain; its full sequence is uncharacterized protein (205 aa).

A signal peptide spans 1–40 (MSAGKSYRKKMKQRRMNMKISKYALGILMLSLVFVLSACG). Residues 44 to 82 (STKESTHDNHSDSSTHEEMDHSGSADVPEGLQESKNPKY) form a disordered region. A compositionally biased stretch (basic and acidic residues) spans 47 to 66 (ESTHDNHSDSSTHEEMDHSG).

This is an uncharacterized protein from Bacillus subtilis (strain 168).